The following is a 300-amino-acid chain: Alpha-tubulin N-acetyltransferase 1 (300 aa).

One can recognise an N-acetyltransferase domain in the interval 1-190; sequence MEFPFDVDAL…NNFVIFEGFF (190 aa). The residue at position 56 (Lys-56) is an N6-acetyllysine; by autocatalysis. 124–137 lines the acetyl-CoA pocket; the sequence is FYIHESLQRHGHGR. Lys-146 carries the N6-acetyllysine; by autocatalysis modification. 160 to 169 contacts acetyl-CoA; it reads SQKLLKFLNK. An N6-acetyllysine; by autocatalysis mark is found at Lys-210 and Lys-221. Disordered regions lie at residues 229–263 and 280–300; these read PLNR…RPFV and TARL…RRTR. A phosphoserine mark is found at Ser-249 and Ser-253. Arg-282 is modified (asymmetric dimethylarginine). Ser-292 is modified (phosphoserine). Arg-300 bears the Omega-N-methylarginine mark.

It belongs to the acetyltransferase ATAT1 family. Component of the BBSome complex. Interacts with AP2 alpha-adaptins, including AP2A2, but not with AP1 gamma-adaptin (AP1G1/AP1G2); this interaction is required for efficient alpha-tubulin acetylation, hence clathrin-coated pits are sites of microtubule acetylation. Autoacetylation strongly increases tubulin acetylation.

The protein localises to the cytoplasm. It is found in the membrane. Its subcellular location is the clathrin-coated pit. The protein resides in the cell junction. It localises to the focal adhesion. The protein localises to the cell projection. It is found in the axon. Its subcellular location is the cytoskeleton. The protein resides in the spindle. It carries out the reaction L-lysyl-[alpha-tubulin] + acetyl-CoA = N(6)-acetyl-L-lysyl-[alpha-tubulin] + CoA + H(+). Its function is as follows. Specifically acetylates 'Lys-40' in alpha-tubulin on the lumenal side of microtubules. Promotes microtubule destabilization and accelerates microtubule dynamics; this activity may be independent of acetylation activity. Acetylates alpha-tubulin with a slow enzymatic rate, due to a catalytic site that is not optimized for acetyl transfer. Enters the microtubule through each end and diffuses quickly throughout the lumen of microtubules. Acetylates only long/old microtubules because of its slow acetylation rate since it does not have time to act on dynamically unstable microtubules before the enzyme is released. Required for normal sperm flagellar function. Promotes directional cell locomotion and chemotaxis, through AP2A2-dependent acetylation of alpha-tubulin at clathrin-coated pits that are concentrated at the leading edge of migrating cells. May facilitate primary cilium assembly. This chain is Alpha-tubulin N-acetyltransferase 1, found in Sus scrofa (Pig).